A 347-amino-acid chain; its full sequence is Outer membrane protein A (347 aa).

The first 21 residues, 1–21 (MKKQALTIIFLLVSLVTGIQA), serve as a signal peptide directing secretion. 8 beta stranded membrane passes run 26-36 (HWYLGTKMGWS), 63-74 (APVFGLFLGYEF), 78-86 (FSFEIENDT), 105-116 (NSLQLATKLSYP), 121-129 (FHIYTQLGG), 154-163 (PNVSLGAEYI), 168-175 (FITRLDYT), and 194-202 (DVALSFGWK). The tract at residues 207-218 (NINEIFSSYIPQ) is hinge-like. Positions 220–347 (SDKQYVALNE…RRVEIEVLSD (128 aa)) constitute an OmpA-like domain. Residues Cys321 and Cys333 are joined by a disulfide bond.

This sequence belongs to the outer membrane OOP (TC 1.B.6) superfamily. OmpA family. As to quaternary structure, monomer and homodimer.

It localises to the cell outer membrane. Its function is as follows. With TolR probably plays a role in maintaining the position of the peptidoglycan cell wall in the periplasm. Acts as a porin with low permeability that allows slow penetration of small solutes; an internal gate slows down solute passage. The chain is Outer membrane protein A from Buchnera aphidicola subsp. Schizaphis graminum (strain Sg).